The primary structure comprises 471 residues: 3-isopropylmalate dehydratase large subunit (471 aa).

Cys347, Cys407, and Cys410 together coordinate [4Fe-4S] cluster.

The protein belongs to the aconitase/IPM isomerase family. LeuC type 1 subfamily. As to quaternary structure, heterodimer of LeuC and LeuD. Requires [4Fe-4S] cluster as cofactor.

The enzyme catalyses (2R,3S)-3-isopropylmalate = (2S)-2-isopropylmalate. It participates in amino-acid biosynthesis; L-leucine biosynthesis; L-leucine from 3-methyl-2-oxobutanoate: step 2/4. In terms of biological role, catalyzes the isomerization between 2-isopropylmalate and 3-isopropylmalate, via the formation of 2-isopropylmaleate. The polypeptide is 3-isopropylmalate dehydratase large subunit (Granulibacter bethesdensis (strain ATCC BAA-1260 / CGDNIH1)).